The sequence spans 380 residues: MYLKHIHLYGFRNYHEQTLDLQSQKTILLGNNAQGKSNLLEAVELLATLKSHRTNRDRDLILEGKKTGQILAMVERTYGESELGITFRSPGRRSLMLNHENLRRHLDFLGHINAVEFSCLDLDLVRGSPETRRSWLDTLLIQLEPVYASIIHQYYKILRQRNALLKVIRKTVEEQENSSNLSAELSQLKVWDQQLAEAGTRVTRRRYRVIERITPLAQKWHQEISSGTEILAINYLPNIKIENEDPQQVQQAFLDKIEQRRMAEQQLATTVVGPHRDDVEFNINHTPAKSYGSQGQQRTLVLAIKLAELQLIEEVIGEPPLLLLDDVLAELDPNRQNQLLEVIQGRFQTLITTTYLHSFDAQWLNSSQIMKVEGGKIAQL.

An ATP-binding site is contributed by 30-37 (GNNAQGKS).

The protein belongs to the RecF family.

Its subcellular location is the cytoplasm. Its function is as follows. The RecF protein is involved in DNA metabolism; it is required for DNA replication and normal SOS inducibility. RecF binds preferentially to single-stranded, linear DNA. It also seems to bind ATP. This Crocosphaera subtropica (strain ATCC 51142 / BH68) (Cyanothece sp. (strain ATCC 51142)) protein is DNA replication and repair protein RecF.